A 239-amino-acid chain; its full sequence is Ribonuclease HII (239 aa).

The RNase H type-2 domain occupies 30 to 221 (GPVAGVDEVG…VRRVATRSNG (192 aa)). Residues Asp36, Glu37, and Asp130 each contribute to the a divalent metal cation site. Positions 217-239 (TRSNGAATAEREADPPQERDGTG) are disordered. Over residues 225-239 (AEREADPPQERDGTG) the composition is skewed to basic and acidic residues.

The protein belongs to the RNase HII family. It depends on Mn(2+) as a cofactor. The cofactor is Mg(2+).

Its subcellular location is the cytoplasm. It catalyses the reaction Endonucleolytic cleavage to 5'-phosphomonoester.. Endonuclease that specifically degrades the RNA of RNA-DNA hybrids. The polypeptide is Ribonuclease HII (Mycobacterium ulcerans (strain Agy99)).